We begin with the raw amino-acid sequence, 769 residues long: PDZ domain-containing protein 4 (769 aa).

Residues 130 to 214 (EVELYKSSHR…TNISLLVARP (85 aa)) enclose the PDZ domain. The disordered stretch occupies residues 221–315 (RWKDSDRDDF…TNTPGSLRKF (95 aa)). The segment covering 229–239 (DFLDDFGSENE) has biased composition (acidic residues). A Phosphoserine modification is found at Ser-236. Residues 282–298 (RTDESTRNEESSEHDLL) are compositionally biased toward basic and acidic residues. Residues 389-419 (VNRNESLGHEMAMLEEELRHLEFKCRNILRA) are a coiled coil. Residues 445–579 (ASEPKKHELS…RHRGQGQEGE (135 aa)) are disordered. The span at 447 to 467 (EPKKHELSDISELPEKSDKDS) shows a compositional bias: basic and acidic residues. Ser-454 carries the phosphoserine modification. The segment covering 468–479 (TSAYNTGESCRS) has biased composition (polar residues). The span at 530-547 (LSRDPEAGRRQHAEERGR) shows a compositional bias: basic and acidic residues.

In terms of tissue distribution, brain-specific. Expressed in fetal and adult brain. Up-regulated in synovial carcinomas.

The protein localises to the cytoplasm. It localises to the cell cortex. In Homo sapiens (Human), this protein is PDZ domain-containing protein 4 (PDZD4).